We begin with the raw amino-acid sequence, 189 residues long: Transcription factor FapR (189 aa).

Belongs to the FapR family.

Functionally, transcriptional factor involved in regulation of membrane lipid biosynthesis by repressing genes involved in fatty acid and phospholipid metabolism. This Listeria welshimeri serovar 6b (strain ATCC 35897 / DSM 20650 / CCUG 15529 / CIP 8149 / NCTC 11857 / SLCC 5334 / V8) protein is Transcription factor FapR.